The sequence spans 202 residues: Large ribosomal subunit protein bL17 (202 aa).

Low complexity predominate over residues 130–142 (AAPAATAPAPVEE). Residues 130–202 (AAPAATAPAP…TEESTEDDKA (73 aa)) are disordered. Acidic residues-rich tracts occupy residues 143–168 (APAE…EASP) and 177–202 (QPVE…DDKA).

It belongs to the bacterial ribosomal protein bL17 family. As to quaternary structure, part of the 50S ribosomal subunit. Contacts protein L32.

The chain is Large ribosomal subunit protein bL17 from Nocardioides sp. (strain ATCC BAA-499 / JS614).